The sequence spans 338 residues: MYG1 protein YER156C (338 aa).

This sequence belongs to the MYG1 family.

This is MYG1 protein YER156C from Saccharomyces cerevisiae (strain ATCC 204508 / S288c) (Baker's yeast).